Reading from the N-terminus, the 1131-residue chain is Plasma membrane ATPase (1131 aa).

6 helical membrane passes run 77–97 (PVLV…EAAA), 98–118 (IISI…LLLI), 151–171 (GAIV…LIRL), 231–251 (AVVY…LISG), 265–285 (MSAI…AVQF), and 305–325 (MLVV…SVTL). The active-site 4-aspartylphosphate intermediate is the D357. Residues D615 and D619 each coordinate Mg(2+). 5 consecutive transmembrane segments (helical) span residues 642–662 (AADI…VIGA), 689–709 (LITV…MAVF), 733–753 (ITNI…STWA), 884–904 (LAFF…LGGF), and 946–966 (VIGC…WYVL). Positions 994-1010 (KRSLDRRSKDDIGDKEF) are enriched in basic and acidic residues. 2 disordered regions span residues 994–1023 (KRSL…NYSN) and 1067–1131 (RRSM…TIRE). Polar residues predominate over residues 1089–1100 (SRTSNTLSTGSK). Over residues 1118 to 1131 (IKPDKYDFASTIRE) the composition is skewed to basic and acidic residues.

It belongs to the cation transport ATPase (P-type) (TC 3.A.3) family. Type IIIA subfamily.

It is found in the cell membrane. It catalyses the reaction ATP + H2O + H(+)(in) = ADP + phosphate + 2 H(+)(out). Functionally, the plasma membrane ATPase of plants and fungi is a hydrogen ion pump. The proton gradient it generates drives the active transport of nutrients by H(+)-symport. The resulting external acidification and/or internal alkinization may mediate growth responses. The chain is Plasma membrane ATPase (PMA1) from Dunaliella bioculata (Green alga).